The sequence spans 842 residues: Ionotropic receptor 21a (842 aa).

Positions Met-1–Ala-15 are cleaved as a signal peptide. Asn-325 carries an N-linked (GlcNAc...) asparagine glycan. A run of 2 helical transmembrane segments spans residues Trp-405–Thr-425 and Trp-437–Phe-457. Asn-469 is a glycosylation site (N-linked (GlcNAc...) asparagine). A helical transmembrane segment spans residues Trp-479–Leu-499. 4 N-linked (GlcNAc...) asparagine glycosylation sites follow: Asn-533, Asn-558, Asn-583, and Asn-588. A helical membrane pass occupies residues Met-680–Val-700. The interval Trp-722–Ala-745 is disordered. Residues Asn-765 and Asn-797 are each glycosylated (N-linked (GlcNAc...) asparagine).

The protein belongs to the glutamate-gated ion channel (TC 1.A.10.1) family. Expressed in the dorsal organ cool cells. In the antenna, expressed in approximately six neurons in the arista as well as five to ten neurons near the third chamber of the sacculus.

The protein resides in the cell membrane. In terms of biological role, integral part of a neural sensory system in the antenna that provides the neural basis for the response to environmental changes in temperature (thermosensation). Together with Ir25a and Ir93a, mediates the response of the dorsal organ cool cells, a trio of cool-responsive neurons, to cooling and is required for cool avoidance behavior. The chain is Ionotropic receptor 21a from Drosophila melanogaster (Fruit fly).